We begin with the raw amino-acid sequence, 106 residues long: Iron-sulfur cluster assembly protein CyaY (106 aa).

Belongs to the frataxin family.

Involved in iron-sulfur (Fe-S) cluster assembly. May act as a regulator of Fe-S biogenesis. This Escherichia fergusonii (strain ATCC 35469 / DSM 13698 / CCUG 18766 / IAM 14443 / JCM 21226 / LMG 7866 / NBRC 102419 / NCTC 12128 / CDC 0568-73) protein is Iron-sulfur cluster assembly protein CyaY.